The primary structure comprises 166 residues: Ureidoglycolate lyase (166 aa).

The protein belongs to the ureidoglycolate lyase family. As to quaternary structure, homodimer. Ni(2+) serves as cofactor.

The catalysed reaction is (S)-ureidoglycolate = urea + glyoxylate. It participates in nitrogen metabolism; (S)-allantoin degradation. Functionally, catalyzes the catabolism of the allantoin degradation intermediate (S)-ureidoglycolate, generating urea and glyoxylate. Involved in the utilization of allantoin as nitrogen source. This Rhizobium leguminosarum bv. trifolii (strain WSM2304) protein is Ureidoglycolate lyase.